We begin with the raw amino-acid sequence, 217 residues long: Somatotropin (217 aa).

Positions 1–27 (MMAAGPRTSLLLAFALLCLPWTQMVGA) are cleaved as a signal peptide. His-46 contributes to the Zn(2+) binding site. A disulfide bond links Cys-79 and Cys-190. Ser-132 bears the Phosphoserine mark. Glu-199 contacts Zn(2+). A disulfide bridge connects residues Cys-207 and Cys-215.

This sequence belongs to the somatotropin/prolactin family.

Its subcellular location is the secreted. Plays an important role in growth control. Its major role in stimulating body growth is to stimulate the liver and other tissues to secrete IGF1. It stimulates both the differentiation and proliferation of myoblasts. It also stimulates amino acid uptake and protein synthesis in muscle and other tissues. The protein is Somatotropin (GH1) of Giraffa camelopardalis (Giraffe).